A 216-amino-acid chain; its full sequence is Thiopurine S-methyltransferase (216 aa).

S-adenosyl-L-methionine-binding residues include W10, L45, E66, and R123.

Belongs to the class I-like SAM-binding methyltransferase superfamily. TPMT family.

It localises to the cytoplasm. The catalysed reaction is S-adenosyl-L-methionine + a thiopurine = S-adenosyl-L-homocysteine + a thiopurine S-methylether.. The sequence is that of Thiopurine S-methyltransferase from Pseudomonas entomophila (strain L48).